Consider the following 423-residue polypeptide: Galactosylceramide sulfotransferase (423 aa).

Over 1 to 14 (MPLPQKKRWESMAK) the chain is Cytoplasmic. A helical; Signal-anchor for type II membrane protein membrane pass occupies residues 15–35 (GLVLGALFTSFLLLLYSYAVP). The Lumenal portion of the chain corresponds to 36 to 423 (PLYTGLASTT…WKFIRDFLRW (388 aa)). The tract at residues 48–70 (GAAPCSPAPREPEAPTSANGSAG) is disordered. N-linked (GlcNAc...) asparagine glycans are attached at residues Asn-66, Asn-156, and Asn-312.

Belongs to the galactose-3-O-sulfotransferase family.

The protein localises to the golgi apparatus membrane. It catalyses the reaction a beta-D-galactosyl-(1&lt;-&gt;1')-N-acylsphing-4-enine + 3'-phosphoadenylyl sulfate = an N-acyl-1-beta-D-(3-O-sulfo)-galactosyl-sphing-4-enine + adenosine 3',5'-bisphosphate + H(+). The catalysed reaction is a 1-O-alkyl-2-acyl-3-O-(beta-D-galactosyl)-sn-glycerol + 3'-phosphoadenylyl sulfate = a 1-O-alkyl-2-acyl-3-(beta-D-3-sulfogalactosyl)-sn-glycerol + adenosine 3',5'-bisphosphate + H(+). The enzyme catalyses a beta-D-Gal-(1&lt;-&gt;1')-ceramide + 3'-phosphoadenylyl sulfate = 1-(3-O-sulfo-beta-D-galactosyl)-ceramide + adenosine 3',5'-bisphosphate + H(+). It carries out the reaction a 1,2-diacyl-3-O-(beta-D-galactosyl)-sn-glycerol + 3'-phosphoadenylyl sulfate = 1,2-diacyl-3-(3-O-sulfo-beta-D-galactosyl)-sn-glycerol + adenosine 3',5'-bisphosphate + H(+). It catalyses the reaction a beta-D-Gal-(1-&gt;4)-beta-D-Glc-(1&lt;-&gt;1)-Cer(d18:1(4E)) + 3'-phosphoadenylyl sulfate = beta-D-3-sulfogalactosyl-(1-&gt;4)-beta-D-glucosyl-(1&lt;-&gt;1')-N-acylsphing-4-enine + adenosine 3',5'-bisphosphate + H(+). The protein operates within lipid metabolism; sphingolipid metabolism. Functionally, catalyzes the transfer of a sulfate group to position 3 of non-reducing beta-galactosyl residues in glycerolipids and sphingolipids, therefore participates in the biosynthesis of sulfoglycolipids. Catalyzes the synthesis of galactosylceramide sulfate (sulfatide), a major lipid component of the myelin sheath and of monogalactosylalkylacylglycerol sulfate (seminolipid), present in spermatocytes. Seems to prefer beta-glycosides at the non-reducing termini of sugar chains attached to a lipid moiety. Also acts on lactosylceramide, galactosyl 1-alkyl-2-sn-glycerol and galactosyl diacylglycerol (in vitro). In Bos taurus (Bovine), this protein is Galactosylceramide sulfotransferase.